We begin with the raw amino-acid sequence, 65 residues long: Large ribosomal subunit protein bL35 (65 aa).

A compositionally biased stretch (basic residues) spans 1–45; the sequence is MPKMKSHSGAKKRFKKTGNGKIKRKKANKGHLLTKKNAKRKRQLR. The tract at residues 1-65 is disordered; that stretch reads MPKMKSHSGA…RDRIKRMLST (65 aa). The span at 48 to 57 shows a compositional bias: basic and acidic residues; that stretch reads VVVDDKANRD.

This sequence belongs to the bacterial ribosomal protein bL35 family.

This chain is Large ribosomal subunit protein bL35, found in Salinibacter ruber (strain DSM 13855 / M31).